Here is a 215-residue protein sequence, read N- to C-terminus: Small ribosomal subunit protein eS1 (215 aa).

Belongs to the eukaryotic ribosomal protein eS1 family.

This Thermoplasma volcanium (strain ATCC 51530 / DSM 4299 / JCM 9571 / NBRC 15438 / GSS1) protein is Small ribosomal subunit protein eS1.